Here is a 309-residue protein sequence, read N- to C-terminus: L-aminoadipate-semialdehyde dehydrogenase-phosphopantetheinyl transferase (309 aa).

Residues Arg-47, 86–91, and 108–111 each bind CoA; these read RTSKGK and NISH. Mg(2+) is bound by residues Asp-129 and Glu-181. CoA is bound at residue 181-185; it reads ESFIK.

Belongs to the P-Pant transferase superfamily. AcpS family. In terms of assembly, monomer. It depends on Mg(2+) as a cofactor.

It localises to the cytoplasm. Its subcellular location is the cytosol. It carries out the reaction apo-[ACP] + CoA = holo-[ACP] + adenosine 3',5'-bisphosphate + H(+). The catalysed reaction is apo-[ACP] + acetyl-CoA = acetyl-[ACP] + adenosine 3',5'-bisphosphate + H(+). In terms of biological role, catalyzes the post-translational modification of target proteins by phosphopantetheine. Can transfer the 4'-phosphopantetheine moiety from coenzyme A, regardless of whether the CoA is presented in the free thiol form or as an acetyl thioester, to a serine residue of a broad range of acceptors including the acyl carrier domain of FASN. The protein is L-aminoadipate-semialdehyde dehydrogenase-phosphopantetheinyl transferase (Aasdhppt) of Rattus norvegicus (Rat).